A 132-amino-acid polypeptide reads, in one-letter code: Small ribosomal subunit protein eS12 (132 aa).

Position 2 is an N-acetylalanine (Ala-2). The residue at position 129 (Lys-129) is an N6-succinyllysine.

The protein belongs to the eukaryotic ribosomal protein eS12 family. Part of the small subunit (SSU) processome, composed of more than 70 proteins and the RNA chaperone small nucleolar RNA (snoRNA) U3. Subunit of the 40S ribosomal complex.

It is found in the nucleus. Its subcellular location is the nucleolus. Functionally, part of the small subunit (SSU) processome, first precursor of the small eukaryotic ribosomal subunit. During the assembly of the SSU processome in the nucleolus, many ribosome biogenesis factors, an RNA chaperone and ribosomal proteins associate with the nascent pre-rRNA and work in concert to generate RNA folding, modifications, rearrangements and cleavage as well as targeted degradation of pre-ribosomal RNA by the RNA exosome. Subunit of the 40S ribosomal complex. In Rattus norvegicus (Rat), this protein is Small ribosomal subunit protein eS12 (Rps12).